Consider the following 212-residue polypeptide: RNA chaperone ProQ (212 aa).

Composition is skewed to basic and acidic residues over residues 102 to 124 (ALKE…EKAK) and 132 to 144 (RKAD…DKPK). Positions 102–149 (ALKESKERVFASRRTNTKEEKAKQPRRPAPRKADAAAKSDKPKAAPKA) are disordered.

Belongs to the ProQ family.

The protein localises to the cytoplasm. RNA chaperone with significant RNA binding, RNA strand exchange and RNA duplexing activities. The protein is RNA chaperone ProQ of Aeromonas hydrophila subsp. hydrophila (strain ATCC 7966 / DSM 30187 / BCRC 13018 / CCUG 14551 / JCM 1027 / KCTC 2358 / NCIMB 9240 / NCTC 8049).